Consider the following 345-residue polypeptide: Green-sensitive opsin (345 aa).

At 1 to 37 the chain is on the extracellular side; it reads MENGTEGKNFYIPMNNRTGLVRSPYEYPQYYLADPWQ. Asparagine 3 and asparagine 16 each carry an N-linked (GlcNAc...) asparagine glycan. A helical membrane pass occupies residues 38 to 62; that stretch reads FKLLGIYMFFLILTGFPINALTLVV. The Cytoplasmic portion of the chain corresponds to 63 to 74; it reads TAQNKKLRQPLN. Residues 75 to 100 traverse the membrane as a helical segment; it reads FILVNLAVAGLIMVCFGFTVCIYSCM. Residues 101 to 114 are Extracellular-facing; that stretch reads VGYFSLGPLGCTIE. Cysteine 111 and cysteine 188 form a disulfide bridge. A helical membrane pass occupies residues 115–134; that stretch reads GFMATLGGQVSLWSLVVLAI. Residues 135–153 lie on the Cytoplasmic side of the membrane; that stretch reads ERYIVVCKPMGSFKFTATH. A helical membrane pass occupies residues 154 to 177; it reads SAAGCAFTWIMASSCAVPPLVGWS. The Extracellular segment spans residues 178–203; that stretch reads RYIPEGIQVSCGPDYYTLAPGFNNES. Asparagine 201 carries N-linked (GlcNAc...) asparagine glycosylation. The helical transmembrane segment at 204–231 threads the bilayer; the sequence is FVMYMFSCHFCVPVFTIFFTYGSLVMTV. The Cytoplasmic segment spans residues 232–253; it reads KAAAAQQQDSASTQKAEKEVTR. Residues 254 to 277 traverse the membrane as a helical segment; the sequence is MCFLMVLGFLLAWVPYASYAAWIF. Over 278 to 285 the chain is Extracellular; that stretch reads FNRGAAFS. Residues 286-310 traverse the membrane as a helical segment; the sequence is AMSMAIPSFFSKSSALFNPIIYILL. Lysine 297 carries the post-translational modification N6-(retinylidene)lysine. Residues 311-345 are Cytoplasmic-facing; sequence NKQFRNCMLATIGMGGMVEDETSVSTSKTEVSTAA.

This sequence belongs to the G-protein coupled receptor 1 family. Opsin subfamily. Phosphorylated on some or all of the serine and threonine residues present in the C-terminal region. As to expression, the color pigments are found in the cone photoreceptor cells.

It localises to the membrane. Functionally, visual pigments are the light-absorbing molecules that mediate vision. They consist of an apoprotein, opsin, covalently linked to cis-retinal. The sequence is that of Green-sensitive opsin from Oryzias latipes (Japanese rice fish).